We begin with the raw amino-acid sequence, 258 residues long: Imidazole glycerol phosphate synthase subunit HisF (258 aa).

Residues Asp11 and Asp130 contribute to the active site.

The protein belongs to the HisA/HisF family. Heterodimer of HisH and HisF.

Its subcellular location is the cytoplasm. It carries out the reaction 5-[(5-phospho-1-deoxy-D-ribulos-1-ylimino)methylamino]-1-(5-phospho-beta-D-ribosyl)imidazole-4-carboxamide + L-glutamine = D-erythro-1-(imidazol-4-yl)glycerol 3-phosphate + 5-amino-1-(5-phospho-beta-D-ribosyl)imidazole-4-carboxamide + L-glutamate + H(+). It functions in the pathway amino-acid biosynthesis; L-histidine biosynthesis; L-histidine from 5-phospho-alpha-D-ribose 1-diphosphate: step 5/9. Functionally, IGPS catalyzes the conversion of PRFAR and glutamine to IGP, AICAR and glutamate. The HisF subunit catalyzes the cyclization activity that produces IGP and AICAR from PRFAR using the ammonia provided by the HisH subunit. The protein is Imidazole glycerol phosphate synthase subunit HisF of Stenotrophomonas maltophilia (strain R551-3).